The sequence spans 185 residues: MTQEILKDTQSRMKKSVQTLEADLTKIRTGRANVSLLDHIEVEYYGAMVPLSQAANVNVTDHRTLSIQIWERDMVAKIEKAIINSDLGLTPNTAGQNIHINLPPLTEERRKEMVKVVKNEGEQAKIAVRNIRRDANQSLSKLLTQKEISEDEQRKSEEEIQKITDHFVAEIDKVLMAKEKELMEL.

Belongs to the RRF family.

The protein localises to the cytoplasm. In terms of biological role, responsible for the release of ribosomes from messenger RNA at the termination of protein biosynthesis. May increase the efficiency of translation by recycling ribosomes from one round of translation to another. The chain is Ribosome-recycling factor from Dichelobacter nodosus (strain VCS1703A).